The sequence spans 197 residues: uncharacterized protein (197 aa).

The first 23 residues, 1–23, serve as a signal peptide directing secretion; sequence MSARAPKELRLALPPCLLNRTFA. N-linked (GlcNAc...) asparagine glycans are attached at residues N19 and N26. At 24–61 the chain is on the extracellular side; sequence SPNASGSGNTGARGPGAGGSGTCITQVGQQLFQSFSST. Residues 62–82 form a helical membrane-spanning segment; it reads LVLIVLVTLIFCLIVLSLSTF. The Cytoplasmic segment spans residues 83 to 197; the sequence is HIHKRRMKKR…EGLLQTVVLS (115 aa). Positions 94–179 are disordered; that stretch reads MQRAQEEYER…ASSPQGAHAV (86 aa). Basic and acidic residues-rich tracts occupy residues 96 to 107 and 125 to 136; these read RAQEEYERDHCS and HAKETRLERQPR. A compositionally biased stretch (low complexity) spans 147–161; it reads SSSSSSSPGLPCQGP. Residues 162–171 are compositionally biased toward pro residues; it reads CAPPPPPPAS.

Its subcellular location is the membrane. This is an uncharacterized protein from Pongo abelii (Sumatran orangutan).